Consider the following 207-residue polypeptide: Holliday junction branch migration complex subunit RuvA (207 aa).

Residues 1 to 64 are domain I; the sequence is MISYIKGELA…EDECSLFGFL (64 aa). The interval 65 to 143 is domain II; sequence TRDDLSMFKM…LDEVFESALS (79 aa). A flexible linker region spans residues 144-155; the sequence is KNKKADNNSNVS. The tract at residues 156–207 is domain III; sequence NVMMIRNDAVEALVSLGYSSKDALVAVKEVEDIENKDSETVLKEALKKLVKF.

It belongs to the RuvA family. In terms of assembly, homotetramer. Forms an RuvA(8)-RuvB(12)-Holliday junction (HJ) complex. HJ DNA is sandwiched between 2 RuvA tetramers; dsDNA enters through RuvA and exits via RuvB. An RuvB hexamer assembles on each DNA strand where it exits the tetramer. Each RuvB hexamer is contacted by two RuvA subunits (via domain III) on 2 adjacent RuvB subunits; this complex drives branch migration. In the full resolvosome a probable DNA-RuvA(4)-RuvB(12)-RuvC(2) complex forms which resolves the HJ.

It is found in the cytoplasm. Its function is as follows. The RuvA-RuvB-RuvC complex processes Holliday junction (HJ) DNA during genetic recombination and DNA repair, while the RuvA-RuvB complex plays an important role in the rescue of blocked DNA replication forks via replication fork reversal (RFR). RuvA specifically binds to HJ cruciform DNA, conferring on it an open structure. The RuvB hexamer acts as an ATP-dependent pump, pulling dsDNA into and through the RuvAB complex. HJ branch migration allows RuvC to scan DNA until it finds its consensus sequence, where it cleaves and resolves the cruciform DNA. In Lachnospira eligens (strain ATCC 27750 / DSM 3376 / VPI C15-48 / C15-B4) (Eubacterium eligens), this protein is Holliday junction branch migration complex subunit RuvA.